Consider the following 184-residue polypeptide: ATP synthase subunit b, chloroplastic (184 aa).

The chain crosses the membrane as a helical span at residues 27–49; that stretch reads LATNPINLSVVFGVLIFFGKGVL.

Belongs to the ATPase B chain family. As to quaternary structure, F-type ATPases have 2 components, F(1) - the catalytic core - and F(0) - the membrane proton channel. F(1) has five subunits: alpha(3), beta(3), gamma(1), delta(1), epsilon(1). F(0) has four main subunits: a(1), b(1), b'(1) and c(10-14). The alpha and beta chains form an alternating ring which encloses part of the gamma chain. F(1) is attached to F(0) by a central stalk formed by the gamma and epsilon chains, while a peripheral stalk is formed by the delta, b and b' chains.

It localises to the plastid. The protein resides in the chloroplast thylakoid membrane. Functionally, f(1)F(0) ATP synthase produces ATP from ADP in the presence of a proton or sodium gradient. F-type ATPases consist of two structural domains, F(1) containing the extramembraneous catalytic core and F(0) containing the membrane proton channel, linked together by a central stalk and a peripheral stalk. During catalysis, ATP synthesis in the catalytic domain of F(1) is coupled via a rotary mechanism of the central stalk subunits to proton translocation. Component of the F(0) channel, it forms part of the peripheral stalk, linking F(1) to F(0). The protein is ATP synthase subunit b, chloroplastic of Arabis hirsuta (Hairy rock-cress).